The chain runs to 278 residues: Putative transposase for insertion sequence element IS986/IS6110 (278 aa).

The region spanning 101–268 is the Integrase catalytic domain; it reads GPPAPNRLWV…VPPVELEAAY (168 aa).

In terms of biological role, involved in the transposition of the insertion sequence. The polypeptide is Putative transposase for insertion sequence element IS986/IS6110 (Mycobacterium bovis (strain ATCC BAA-935 / AF2122/97)).